A 734-amino-acid polypeptide reads, in one-letter code: Photosystem I P700 chlorophyll a apoprotein A2 (734 aa).

The next 8 helical transmembrane spans lie at 46 to 69, 135 to 158, 175 to 199, 273 to 291, 330 to 353, 369 to 395, 417 to 439, and 517 to 535; these read IFASHFGQLAIIFLWTSGNLFHVA, LYTGALFLLVGAAILLFAGWLHLQ, LNHHLAGLFGVSSLAWTGHLVHVAI, MAHHHLAIAVVFILAGHMY, LHFQLGLALASLGVITSLVAQHMY, SALYTHHQYIAGFIMTGAFAHGAIFFI, ALISHLSWVTLFLGFHTLGLYVH, and FLVHHAIALGLHTTTLILV. [4Fe-4S] cluster contacts are provided by Cys559 and Cys568. Helical transmembrane passes span 575 to 596 and 643 to 665; these read AFYLAVFWMLNTIGWTTFYWHW and LSVWAWMFLFGHLVWATGFMFLI. The chlorophyll a site is built by His654, Met662, and Tyr670. Residue Trp671 participates in phylloquinone binding. A helical transmembrane segment spans residues 707–727; the sequence is LVGLAHFSVGYVFTYAAFVIA.

It belongs to the PsaA/PsaB family. The PsaA/B heterodimer binds the P700 chlorophyll special pair and subsequent electron acceptors. PSI consists of a core antenna complex that captures photons, and an electron transfer chain that converts photonic excitation into a charge separation. The eukaryotic PSI reaction center is composed of at least 11 subunits. The cofactor is P700 is a chlorophyll a/chlorophyll a' dimer, A0 is one or more chlorophyll a, A1 is one or both phylloquinones and FX is a shared 4Fe-4S iron-sulfur center..

It is found in the plastid. The protein resides in the chloroplast thylakoid membrane. It carries out the reaction reduced [plastocyanin] + hnu + oxidized [2Fe-2S]-[ferredoxin] = oxidized [plastocyanin] + reduced [2Fe-2S]-[ferredoxin]. In terms of biological role, psaA and PsaB bind P700, the primary electron donor of photosystem I (PSI), as well as the electron acceptors A0, A1 and FX. PSI is a plastocyanin/cytochrome c6-ferredoxin oxidoreductase, converting photonic excitation into a charge separation, which transfers an electron from the donor P700 chlorophyll pair to the spectroscopically characterized acceptors A0, A1, FX, FA and FB in turn. Oxidized P700 is reduced on the lumenal side of the thylakoid membrane by plastocyanin or cytochrome c6. The polypeptide is Photosystem I P700 chlorophyll a apoprotein A2 (Nephroselmis olivacea (Green alga)).